Consider the following 127-residue polypeptide: Glycine cleavage system H protein (127 aa).

A Lipoyl-binding domain is found at 22 to 104 (EVVIGITHFA…YEGAWMVKVE (83 aa)). Lys63 is modified (N6-lipoyllysine).

The protein belongs to the GcvH family. The glycine cleavage system is composed of four proteins: P, T, L and H. (R)-lipoate is required as a cofactor.

The glycine cleavage system catalyzes the degradation of glycine. The H protein shuttles the methylamine group of glycine from the P protein to the T protein. In terms of biological role, is also involved in protein lipoylation via its role as an octanoyl/lipoyl carrier protein intermediate. This is Glycine cleavage system H protein from Bacillus cereus (strain B4264).